The chain runs to 410 residues: Chloride intracellular channel protein 5 (410 aa).

A G-site motif is present at residues C191–S194. A helical membrane pass occupies residues F193 to V213. The 141-residue stretch at Y260–Y400 folds into the GST C-terminal domain.

This sequence belongs to the chloride channel CLIC family. As to quaternary structure, component of a multimeric complex consisting of several cytoskeletal proteins, including actin, ezrin, alpha-actinin, gelsolin, and IQGAP1. Interacts with AKAP9. Interacts with TPRN. TPRN, CLIC5 and PTPQR form concentric rings at the base of stereocilia and may form a complex. Interacts with EZR, MYO6 and RDX; the proteins may work together as a complex to stabilize linkages between the plasma membrane and subjacent actin cytoskeleton at the stereocilium base. Widely expressed in both fetal and adult human tissues. Isoform 1 is expressed in renal glomeruli endothelial cells and podocytes (at protein level).

The protein resides in the cytoplasm. The protein localises to the cytoskeleton. It localises to the cell cortex. Its subcellular location is the membrane. It is found in the apical cell membrane. The protein resides in the mitochondrion. The protein localises to the cell projection. It localises to the stereocilium. Its subcellular location is the golgi apparatus. It is found in the microtubule organizing center. The protein resides in the centrosome. It carries out the reaction chloride(in) = chloride(out). The enzyme catalyses Na(+)(in) = Na(+)(out). It catalyses the reaction K(+)(in) = K(+)(out). Inhibited by F-actin. In terms of biological role, in the soluble state, catalyzes glutaredoxin-like thiol disulfide exchange reactions with reduced glutathione as electron donor. Can insert into membranes and form non-selective ion channels almost equally permeable to Na(+), K(+) and Cl(-). Required for normal hearing. It is necessary for the formation of stereocilia in the inner ear and normal development of the organ of Corti. May play a role in the regulation of transepithelial ion absorption and secretion. Is required for the development and/or maintenance of the proper glomerular endothelial cell and podocyte architecture. Plays a role in formation of the lens suture in the eye, which is important for normal optical properties of the lens. This Homo sapiens (Human) protein is Chloride intracellular channel protein 5.